The chain runs to 337 residues: MSIIVNQIVLHQLVKTSQDENTVQLKTHLRDELLPITAETEQMMLQLHQEYHNKTKAYGVFQETSNFAQILNRTLENDIDFLAFSHQSAELLRQELGKYSFANDGTLILCQYNFLATDYLFIALLDSRYSMLVDENLEIKQTHYLDITQFDIACRINLTELHLDAKSTRYLTFIKGRVGRKIADFFMDFLGAEEGLNPQVQNQCLLQAVSDYCQQADLTKEQTQAVKKQVFDYCKGQINVGEEIVVRELSANIPTLNEQSFVDFAVSQNYGLEENIPPVRTALKSLTKFSGSGKGITLSFDAELLNSRIFWDEATDSLTITGLPPNLRDQLQRQTKE.

This sequence belongs to the YejK family.

Its subcellular location is the cytoplasm. The protein localises to the nucleoid. This Histophilus somni (strain 129Pt) (Haemophilus somnus) protein is Nucleoid-associated protein HS_0228.